Consider the following 144-residue polypeptide: Small ribosomal subunit protein eS19B (144 aa).

This sequence belongs to the eukaryotic ribosomal protein eS19 family. Component of the small ribosomal subunit (SSU). Mature yeast ribosomes consist of a small (40S) and a large (60S) subunit. The 40S small subunit contains 1 molecule of ribosomal RNA (18S rRNA) and 33 different proteins (encoded by 57 genes). The large 60S subunit contains 3 rRNA molecules (25S, 5.8S and 5S rRNA) and 46 different proteins (encoded by 81 genes).

It localises to the cytoplasm. Its function is as follows. Component of the ribosome, a large ribonucleoprotein complex responsible for the synthesis of proteins in the cell. The small ribosomal subunit (SSU) binds messenger RNAs (mRNAs) and translates the encoded message by selecting cognate aminoacyl-transfer RNA (tRNA) molecules. The large subunit (LSU) contains the ribosomal catalytic site termed the peptidyl transferase center (PTC), which catalyzes the formation of peptide bonds, thereby polymerizing the amino acids delivered by tRNAs into a polypeptide chain. The nascent polypeptides leave the ribosome through a tunnel in the LSU and interact with protein factors that function in enzymatic processing, targeting, and the membrane insertion of nascent chains at the exit of the ribosomal tunnel. eS19 is required for proper maturation of the small (40S) ribosomal subunit. Binds to 40S pre-ribosomal particles, probably required after association of NOC4 but before association of ENP1, TSR1 and RIO2 with 20/21S pre-rRNA. Functionally, required for proper maturation of the small (40S) ribosomal subunit. Binds to 40s pre-ribosomal particles, probably required after association of NOC4 but before association of ENP1, TSR1 and RIO2 with 20/21S pre-rRNA. The sequence is that of Small ribosomal subunit protein eS19B from Saccharomyces cerevisiae (strain ATCC 204508 / S288c) (Baker's yeast).